A 233-amino-acid polypeptide reads, in one-letter code: Phytol kinase (233 aa).

Helical transmembrane passes span 9-29 (MALP…AVVL), 56-76 (VVLI…AGVF), 96-118 (VGRH…GGFF), 122-144 (LPIF…ALVG), 172-192 (FLVT…VLVV), and 213-233 (NLTV…LWLG).

It belongs to the polyprenol kinase family.

It is found in the cell membrane. It catalyses the reaction phytol + CTP = phytyl phosphate + CDP + H(+). Its pathway is cofactor biosynthesis; tocopherol biosynthesis. In terms of biological role, catalyzes the CTP-dependent phosphorylation of phytol to phytylmonophosphate (PMP). Can also use UTP as an alternative phosphate donor, but not ATP or GTP. Is involved in tocopherol biosynthesis, via the utilization of phytol generated by chlorophyll degradation. Also plays a significant but not critical role in the recycling of phytol for the biosynthesis of new chlorophyll molecules. This chain is Phytol kinase, found in Synechocystis sp. (strain ATCC 27184 / PCC 6803 / Kazusa).